The primary structure comprises 370 residues: Protein STRICTOSIDINE SYNTHASE-LIKE 9 (370 aa).

An N-terminal signal peptide occupies residues 1–26; that stretch reads MPINQKIPTWFAVPAVFAVLSVISYQ. N-linked (GlcNAc...) asparagine glycans are attached at residues N97 and N171.

It belongs to the strictosidine synthase family.

Its subcellular location is the vacuole. This chain is Protein STRICTOSIDINE SYNTHASE-LIKE 9, found in Arabidopsis thaliana (Mouse-ear cress).